The primary structure comprises 508 residues: Photosystem II CP47 reaction center protein (508 aa).

The next 6 helical transmembrane spans lie at 21–36 (SVHI…WAGS), 101–115 (IILA…MWHW), 140–156 (GIHL…FGAF), 203–218 (IAAG…FHLS), 237–252 (VLSS…AFVV), and 457–472 (CFAL…HGAR).

It belongs to the PsbB/PsbC family. PsbB subfamily. PSII is composed of 1 copy each of membrane proteins PsbA, PsbB, PsbC, PsbD, PsbE, PsbF, PsbH, PsbI, PsbJ, PsbK, PsbL, PsbM, PsbT, PsbX, PsbY, PsbZ, Psb30/Ycf12, at least 3 peripheral proteins of the oxygen-evolving complex and a large number of cofactors. It forms dimeric complexes. The cofactor is Binds multiple chlorophylls. PSII binds additional chlorophylls, carotenoids and specific lipids..

It localises to the plastid. Its subcellular location is the chloroplast thylakoid membrane. Functionally, one of the components of the core complex of photosystem II (PSII). It binds chlorophyll and helps catalyze the primary light-induced photochemical processes of PSII. PSII is a light-driven water:plastoquinone oxidoreductase, using light energy to abstract electrons from H(2)O, generating O(2) and a proton gradient subsequently used for ATP formation. The sequence is that of Photosystem II CP47 reaction center protein from Mesostigma viride (Green alga).